The chain runs to 250 residues: uncharacterized protein (250 aa).

A coiled-coil region spans residues 165–208 (HLNLETANTKATEYQKNYQEELKQRQELRQKLLQERTQKMLEAL). The span at 201–233 (TQKMLEALHQEETPEQDARDTAKKKTDQEEHTM) shows a compositional bias: basic and acidic residues. The tract at residues 201 to 250 (TQKMLEALHQEETPEQDARDTAKKKTDQEEHTMRKANAPKTKASGEAPTP) is disordered.

This is an uncharacterized protein from Treponema pallidum (strain Nichols).